A 224-amino-acid polypeptide reads, in one-letter code: 7-cyano-7-deazaguanine synthase (224 aa).

Position 9-19 (9-19 (ISGGMDSTLCA)) interacts with ATP. 4 residues coordinate Zn(2+): cysteine 190, cysteine 198, cysteine 201, and cysteine 204.

Belongs to the QueC family. Zn(2+) is required as a cofactor.

It catalyses the reaction 7-carboxy-7-deazaguanine + NH4(+) + ATP = 7-cyano-7-deazaguanine + ADP + phosphate + H2O + H(+). It functions in the pathway purine metabolism; 7-cyano-7-deazaguanine biosynthesis. In terms of biological role, catalyzes the ATP-dependent conversion of 7-carboxy-7-deazaguanine (CDG) to 7-cyano-7-deazaguanine (preQ(0)). This chain is 7-cyano-7-deazaguanine synthase, found in Campylobacter jejuni (strain RM1221).